Here is a 222-residue protein sequence, read N- to C-terminus: Putative metal transport protein MJ1569 (222 aa).

Transmembrane regions (helical) follow at residues 3-23, 39-59, 81-101, 102-122, 135-155, and 180-200; these read IPDGYLGPITCAFFYLIMIPI, LPLLGVLTAFSFLVMMFNLPV, WVATIAISIVLIIQAIFFGDG, GITCIGANCFNMGVVLPFVGY, VIASGIGAYVGIVAAAIVAGF, and AFAHLITAGPAAAVVTAIVVW.

It belongs to the CbiM family.

Its subcellular location is the cell membrane. Functionally, may be involved in metal transport. The polypeptide is Putative metal transport protein MJ1569 (Methanocaldococcus jannaschii (strain ATCC 43067 / DSM 2661 / JAL-1 / JCM 10045 / NBRC 100440) (Methanococcus jannaschii)).